The chain runs to 96 residues: Small ribosomal subunit protein bS6 (96 aa).

This sequence belongs to the bacterial ribosomal protein bS6 family.

Its function is as follows. Binds together with bS18 to 16S ribosomal RNA. The polypeptide is Small ribosomal subunit protein bS6 (rpsF) (Mycobacterium bovis (strain ATCC BAA-935 / AF2122/97)).